We begin with the raw amino-acid sequence, 290 residues long: MQIISDPHAMQAISENVRLQGKRLAVVMTMGALHEGHISLVTLARKSADTVIMTLFVNPTQFSAGEDLERYPRPFEQDVAHAEAAGVDYLFAPTSAEMYPAGHQTSVQCGALAERFEGAHRSGHFNGVATVVTKLLHITKPHTAIFGEKDAQQLAIIRQLVADLLIDVEIIGAPIVREADGLAKSSRNIYLSSNERKRATVLYGGLCHAKARLAEGEQNLKLIATEVEALITATEGCTIDYVAFVDEATFLPIEQADASKRYRLLLAVRLGSVRLIDNMVMGTKDSYKPC.

30 to 37 (MGALHEGH) serves as a coordination point for ATP. The active-site Proton donor is the H37. Q61 lines the (R)-pantoate pocket. Beta-alanine is bound at residue Q61. Residue 147-150 (GEKD) participates in ATP binding. Q153 contacts (R)-pantoate. ATP is bound by residues V176 and 184–187 (KSSR).

This sequence belongs to the pantothenate synthetase family. Homodimer.

The protein localises to the cytoplasm. It catalyses the reaction (R)-pantoate + beta-alanine + ATP = (R)-pantothenate + AMP + diphosphate + H(+). Its pathway is cofactor biosynthesis; (R)-pantothenate biosynthesis; (R)-pantothenate from (R)-pantoate and beta-alanine: step 1/1. Its function is as follows. Catalyzes the condensation of pantoate with beta-alanine in an ATP-dependent reaction via a pantoyl-adenylate intermediate. The polypeptide is Pantothenate synthetase (Chlorobium chlorochromatii (strain CaD3)).